A 78-amino-acid polypeptide reads, in one-letter code: Small ribosomal subunit protein bS18B (78 aa).

The interval methionine 1–glycine 22 is disordered.

It belongs to the bacterial ribosomal protein bS18 family. As to quaternary structure, part of the 30S ribosomal subunit. Forms a tight heterodimer with protein bS6.

Binds as a heterodimer with protein bS6 to the central domain of the 16S rRNA, where it helps stabilize the platform of the 30S subunit. The chain is Small ribosomal subunit protein bS18B from Streptomyces avermitilis (strain ATCC 31267 / DSM 46492 / JCM 5070 / NBRC 14893 / NCIMB 12804 / NRRL 8165 / MA-4680).